A 112-amino-acid polypeptide reads, in one-letter code: Iron-sulfur cluster insertion protein ErpA (112 aa).

The iron-sulfur cluster site is built by C40, C104, and C106.

It belongs to the HesB/IscA family. In terms of assembly, homodimer. Requires iron-sulfur cluster as cofactor.

Functionally, required for insertion of 4Fe-4S clusters for at least IspG. This Pseudoalteromonas translucida (strain TAC 125) protein is Iron-sulfur cluster insertion protein ErpA.